The sequence spans 347 residues: Cyclic AMP-dependent transcription factor ATF-4 (347 aa).

The segment at 202 to 296 (TPQCVKEEDT…AATRYRQKKR (95 aa)) is disordered. T211 is subject to Phosphothreonine. A phosphoserine mark is found at S213, S217, S222, S229, and S233. A BetaTrCP degron motif motif is present at residues 213-222 (SDSDSGICMS). Polar residues predominate over residues 228–238 (GSPQHSPSTSR). At P234 the chain carries 4-hydroxyproline. Residues S243 and S246 each carry the phosphoserine modification. Residues K256 and K268 each participate in a glycyl lysine isopeptide (Lys-Gly) (interchain with G-Cter in SUMO2) cross-link. Positions 269 to 283 (VKTEKLDKKLKKMEQ) are enriched in basic and acidic residues. A bZIP domain is found at 274-337 (LDKKLKKMEQ…QYLKDLIEEV (64 aa)). A basic motif region spans residues 276-296 (KKLKKMEQNKTAATRYRQKKR). The interaction with GABBR1 stretch occupies residues 301–337 (ALTGECKELEKKNEALKEKADSLAKEIQYLKDLIEEV). Residues 302–330 (LTGECKELEKKNEALKEKADSLAKEIQYL) are leucine-zipper. The residue at position 307 (K307) is an N6-acetyllysine.

The protein belongs to the bZIP family. Binds DNA as a homodimer and as a heterodimer. Heterodimer; heterodimerizes with CEBPB. Heterodimer; heterodimerizes with DDIT3/CHOP. Interacts with CEP290 (via an N-terminal region). Interacts with NEK6, DAPK2 (isoform 2) and ZIPK/DAPK3. Interacts (via its leucine zipper domain) with GABBR1 and GABBR2 (via their C-termini). Forms a heterodimer with TXLNG in osteoblasts. Interacts (via its DNA binding domain) with FOXO1 (C-terminal half); the interaction occurs in osteoblasts and regulates glucose homeostasis through suppression of beta-cell proliferation and a decrease in insulin production. Interacts with SATB2; the interaction results in enhanced DNA binding and transactivation by these transcription factors. Interacts with ABRAXAS2. Interacts with TRIB3, inhibiting the transactivation activity of ATF4. Interacts with DISC1; which inhibits ATF4 transcription factor activity by disrupting ATF4 dimerization and DNA-binding. Interacts with EP300/p300; EP300/p300 stabilizes ATF4 and increases its transcriptional activity independently of its catalytic activity by preventing its ubiquitination. Post-translationally, ubiquitinated by SCF(BTRC) in response to mTORC1 signal, followed by proteasomal degradation and leading to down-regulate expression of SIRT4. Interaction with EP300/p300 inhibits ubiquitination by SCF(BTRC). Phosphorylation at Ser-243 by RPS6KA3/RSK2 in osteoblasts enhances transactivation activity and promotes osteoblast differentiation. Phosphorylated on the betaTrCP degron motif at Ser-217, followed by phosphorylation at Thr-211, Ser-222, Ser-229, Ser-233 and Ser-246, promoting interaction with BTRC and ubiquitination. Phosphorylation is promoted by mTORC1. Phosphorylation at Ser-213 by CK2 decreases its stability. Phosphorylated by NEK6. In terms of processing, hydroxylated by PHD3, leading to decreased protein stability. As to expression, expressed in brain, heart, liver, spleen, lung and muscle, but not testis.

It localises to the nucleus. It is found in the nucleus speckle. Its subcellular location is the cytoplasm. The protein localises to the cell membrane. The protein resides in the cytoskeleton. It localises to the microtubule organizing center. It is found in the centrosome. Transcription factor that binds the cAMP response element (CRE) (consensus: 5'-GTGACGT[AC][AG]-3') and displays two biological functions, as regulator of metabolic and redox processes under normal cellular conditions, and as master transcription factor during integrated stress response (ISR). Binds to asymmetric CRE's as a heterodimer and to palindromic CRE's as a homodimer. Core effector of the ISR, which is required for adaptation to various stress such as endoplasmic reticulum (ER) stress, amino acid starvation, mitochondrial stress or oxidative stress. During ISR, ATF4 translation is induced via an alternative ribosome translation re-initiation mechanism in response to EIF2S1/eIF-2-alpha phosphorylation, and stress-induced ATF4 acts as a master transcription factor of stress-responsive genes in order to promote cell recovery. Promotes the transcription of genes linked to amino acid sufficiency and resistance to oxidative stress to protect cells against metabolic consequences of ER oxidation. Activates the transcription of NLRP1, possibly in concert with other factors in response to ER stress. Activates the transcription of asparagine synthetase (ASNS) in response to amino acid deprivation or ER stress. However, when associated with DDIT3/CHOP, the transcriptional activation of the ASNS gene is inhibited in response to amino acid deprivation. Together with DDIT3/CHOP, mediates programmed cell death by promoting the expression of genes involved in cellular amino acid metabolic processes, mRNA translation and the terminal unfolded protein response (terminal UPR), a cellular response that elicits programmed cell death when ER stress is prolonged and unresolved. Activates the expression of COX7A2L/SCAF1 downstream of the EIF2AK3/PERK-mediated unfolded protein response, thereby promoting formation of respiratory chain supercomplexes and increasing mitochondrial oxidative phosphorylation. Together with DDIT3/CHOP, activates the transcription of the IRS-regulator TRIB3 and promotes ER stress-induced neuronal cell death by regulating the expression of BBC3/PUMA in response to ER stress. May cooperate with the UPR transcriptional regulator QRICH1 to regulate ER protein homeostasis which is critical for cell viability in response to ER stress. In the absence of stress, ATF4 translation is at low levels and it is required for normal metabolic processes such as embryonic lens formation, fetal liver hematopoiesis, bone development and synaptic plasticity. Acts as a regulator of osteoblast differentiation in response to phosphorylation by RPS6KA3/RSK2: phosphorylation in osteoblasts enhances transactivation activity and promotes expression of osteoblast-specific genes and post-transcriptionally regulates the synthesis of Type I collagen, the main constituent of the bone matrix. Cooperates with FOXO1 in osteoblasts to regulate glucose homeostasis through suppression of beta-cell production and decrease in insulin production. Activates transcription of SIRT4. Regulates the circadian expression of the core clock component PER2 and the serotonin transporter SLC6A4. Binds in a circadian time-dependent manner to the cAMP response elements (CRE) in the SLC6A4 and PER2 promoters and periodically activates the transcription of these genes. Mainly acts as a transcriptional activator in cellular stress adaptation, but it can also act as a transcriptional repressor: acts as a regulator of synaptic plasticity by repressing transcription, thereby inhibiting induction and maintenance of long-term memory. Regulates synaptic functions via interaction with DISC1 in neurons, which inhibits ATF4 transcription factor activity by disrupting ATF4 dimerization and DNA-binding. The polypeptide is Cyclic AMP-dependent transcription factor ATF-4 (Rattus norvegicus (Rat)).